A 329-amino-acid chain; its full sequence is Ubiquinol oxidase 1c, mitochondrial (329 aa).

The N-terminal 45 residues, 1-45, are a transit peptide targeting the mitochondrion; the sequence is MITTLLRRSLLDASKQATSINGILFHQLAPAKYFRVPAVGGLRDF. Residues 154–174 traverse the membrane as a helical segment; it reads AIMLETVAAVPGMVGGMLMHF. Positions 158, 197, and 200 each coordinate Fe cation. The chain crosses the membrane as a helical span at residues 216–236; that stretch reads ALVISVQGVFFNAYLIGYIIS. Residues E248, E299, and H302 each contribute to the Fe cation site.

It belongs to the alternative oxidase family. In terms of assembly, homodimer; disulfide-linked. Fe cation is required as a cofactor. As to expression, expressed in roots, stems, leaves, cotyledons and flowers. High expression in stamens.

It localises to the mitochondrion inner membrane. The enzyme catalyses 2 a ubiquinol + O2 = 2 a ubiquinone + 2 H2O. Its function is as follows. Catalyzes the cyanide-resistant oxidation of ubiquinol and the reduction of molecular oxygen to water, but does not translocate protons and consequently is not linked to oxidative phosphorylation. May increase respiration when the cytochrome respiratory pathway is restricted, or in response to low temperatures. This is Ubiquinol oxidase 1c, mitochondrial (AOX1C) from Arabidopsis thaliana (Mouse-ear cress).